The chain runs to 319 residues: Biotin synthase (319 aa).

One can recognise a Radical SAM core domain in the interval 44–273; it reads IHGDGIDLCS…EAKIRLAGGR (230 aa). [4Fe-4S] cluster is bound by residues Cys62, Cys66, and Cys69. Positions 106, 138, 198, and 268 each coordinate [2Fe-2S] cluster.

It belongs to the radical SAM superfamily. Biotin synthase family. Homodimer. [4Fe-4S] cluster serves as cofactor. Requires [2Fe-2S] cluster as cofactor.

It catalyses the reaction (4R,5S)-dethiobiotin + (sulfur carrier)-SH + 2 reduced [2Fe-2S]-[ferredoxin] + 2 S-adenosyl-L-methionine = (sulfur carrier)-H + biotin + 2 5'-deoxyadenosine + 2 L-methionine + 2 oxidized [2Fe-2S]-[ferredoxin]. Its pathway is cofactor biosynthesis; biotin biosynthesis; biotin from 7,8-diaminononanoate: step 2/2. Functionally, catalyzes the conversion of dethiobiotin (DTB) to biotin by the insertion of a sulfur atom into dethiobiotin via a radical-based mechanism. This is Biotin synthase from Clostridium perfringens (strain ATCC 13124 / DSM 756 / JCM 1290 / NCIMB 6125 / NCTC 8237 / Type A).